A 351-amino-acid polypeptide reads, in one-letter code: Protein RecA (351 aa).

Position 67–74 (67–74 (GPESSGKT)) interacts with ATP.

The protein belongs to the RecA family.

Its subcellular location is the cytoplasm. Its function is as follows. Can catalyze the hydrolysis of ATP in the presence of single-stranded DNA, the ATP-dependent uptake of single-stranded DNA by duplex DNA, and the ATP-dependent hybridization of homologous single-stranded DNAs. It interacts with LexA causing its activation and leading to its autocatalytic cleavage. This is Protein RecA from Arthrobacter sp. (strain FB24).